Here is a 1107-residue protein sequence, read N- to C-terminus: DNA polymerase delta catalytic subunit (1107 aa).

Residues 1 to 34 (MDGKRRPGPGPGVPPKRARGGLWDDDDAPRPSQF) are disordered. A Nuclear localization signal motif is present at residues 4–19 (KRRPGPGPGVPPKRAR). Arg-19 carries the post-translational modification Omega-N-methylarginine. Lys-574 is covalently cross-linked (Glycyl lysine isopeptide (Lys-Gly) (interchain with G-Cter in SUMO2)). 4 residues coordinate Zn(2+): Cys-1012, Cys-1015, Cys-1026, and Cys-1029. The segment at 1012-1029 (CIGCRTVLSHQGAVCEFC) adopts a CysA-type zinc-finger fold. Cys-1058, Cys-1061, Cys-1071, and Cys-1076 together coordinate [4Fe-4S] cluster. The short motif at 1058–1076 (CQRCQGSLHEDVICTSRDC) is the CysB motif element.

The protein belongs to the DNA polymerase type-B family. Component of the tetrameric DNA polymerase delta complex (Pol-delta4), which consists of POLD1/p125, POLD2/p50, POLD3/p66/p68 and POLD4/p12, with POLD1 bearing both DNA polymerase and 3' to 5' proofreading exonuclease activities. Within Pol-delta4, directly interacts with POLD2 and POLD4. Following genotoxic stress by DNA-damaging agents, such as ultraviolet light and methyl methanesulfonate, or by replication stress induced by treatment with hydroxyurea or aphidicolin, Pol-delta4 is converted into a trimeric form of the complex (Pol-delta3) by POLD4 degradation. Pol-delta3 is the major form at S phase replication sites and DNA damage sites. POLD1 displays different catalytic properties depending upon the complex it is found in. It exhibits higher proofreading activity and fidelity than Pol-delta4, making it particularly well suited to respond to DNA damage. Directly interacts with PCNA, as do POLD3 and POLD4; this interaction stimulates Pol-delta4 polymerase activity. As POLD2 and POLD4, directly interacts with WRNIP1; this interaction stimulates DNA polymerase delta-mediated DNA synthesis, independently of the presence of PCNA. This stimulation may be due predominantly to an increase of initiation frequency and also to increased processivity. Also observed as a dimeric complex with POLD2 (Pol-delta2 complex). Pol-delta2 is relatively insensitive to the PCNA stimulation (2-5-fold) compared to Pol-delta4 that is stimulated by over 50-fold. The DNA polymerase delta complex interacts with POLDIP2; this interaction is probably mediated through direct binding to POLD2. Interacts with CIAO1. Interacts with POLDIP2. Interacts with RFC1. Requires [4Fe-4S] cluster as cofactor. As to expression, widely expressed, with high levels of expression in heart and lung.

Its subcellular location is the nucleus. The catalysed reaction is DNA(n) + a 2'-deoxyribonucleoside 5'-triphosphate = DNA(n+1) + diphosphate. Its activity is regulated as follows. Regulated by alteration of quaternary structure. Exhibits burst rates of DNA synthesis are about 5 times faster in the presence of POLD4 (Pol-delta4 complex) than in its absence (Pol-delta3 complex), while the affinity of the enzyme for its DNA and dNTP substrates appears unchanged. The Pol-delta3 complex is more likely to proofread DNA synthesis because it cleaves single-stranded DNA twice as fast and transfers mismatched DNA from the polymerase to the exonuclease sites 9 times faster compared to the Pol-delta3 complex. Pol-delta3 also extends mismatched primers 3 times more slowly in the absence of POLD4. The conversion of Pol-delta4 into Pol-delta3 is induced by genotoxic stress or by replication stress leading POLD4 degradation. Stimulated in the presence of PCNA. This stimulation is further increased in the presence of KCTD13/PDIP1, most probably via direct interaction between KCTD13 and POLD2. Functionally, as the catalytic component of the trimeric (Pol-delta3 complex) and tetrameric DNA polymerase delta complexes (Pol-delta4 complex), plays a crucial role in high fidelity genome replication, including in lagging strand synthesis, and repair. Exhibits both DNA polymerase and 3'- to 5'-exonuclease activities. Requires the presence of accessory proteins POLD2, POLD3 and POLD4 for full activity. Depending upon the absence (Pol-delta3) or the presence of POLD4 (Pol-delta4), displays differences in catalytic activity. Most notably, expresses higher proofreading activity in the context of Pol-delta3 compared with that of Pol-delta4. Although both Pol-delta3 and Pol-delta4 process Okazaki fragments in vitro, Pol-delta3 may be better suited to fulfill this task, exhibiting near-absence of strand displacement activity compared to Pol-delta4 and stalling on encounter with the 5'-blocking oligonucleotides. Pol-delta3 idling process may avoid the formation of a gap, while maintaining a nick that can be readily ligated. Along with DNA polymerase kappa, DNA polymerase delta carries out approximately half of nucleotide excision repair (NER) synthesis following UV irradiation. Under conditions of DNA replication stress, in the presence of POLD3 and POLD4, may catalyze the repair of broken replication forks through break-induced replication (BIR). Involved in the translesion synthesis (TLS) of templates carrying O6-methylguanine, 8oxoG or abasic sites. In Homo sapiens (Human), this protein is DNA polymerase delta catalytic subunit.